The chain runs to 176 residues: MIVVVLVCIFLANGIKATAVQPDLHEHPVLTWDLLQHFVGNTLYITTHQVLALPLGSRVECESVDGFNCTRPGFQNSAHDHIDFYFDLSNPFYSFVDNFYIVVEGNQKINLRLVGAVPKQKRLKLSYKATRCLKLVFPRNYWSSRCLLLYRMVSTCNGRYKQPHCILGSLDLIWQC.

The first 17 residues, 1–17 (MIVVVLVCIFLANGIKA), serve as a signal peptide directing secretion.

The chain is Non-structural protein 7b from Felidae (cat family).